A 410-amino-acid chain; its full sequence is Protein BTN2 (410 aa).

Disordered stretches follow at residues 223–264 (INEP…TKED) and 276–410 (MQEE…IEEI). Basic and acidic residues-rich tracts occupy residues 233–264 (SKIDESHDDVNMSESLKEEEAEKAKEPLTKED) and 276–311 (MQEESRKSEQEKAAKEDEERQKKEKEARLKARKESL). A coiled-coil region spans residues 243–330 (NMSESLKEEE…QQKKLQNSKS (88 aa)). Low complexity predominate over residues 334–362 (SEIEASNKNNNSNSGSAESDNESINSDSD). A compositionally biased stretch (polar residues) spans 364–373 (TLDFSVSGNT).

As to quaternary structure, interacts with RHB1, IST2, TDA3 and YIF1.

It localises to the cytoplasm. The protein resides in the late endosome. V-SNARE binding protein that facilitates specific protein retrieval from a late endosome to the Golgi. Modulates the rate of arginine uptake. Involved in pH homeostasis. Required for the correct localization of IST2. May be involved in ion homeostasis together with IST2. In Saccharomyces cerevisiae (strain ATCC 204508 / S288c) (Baker's yeast), this protein is Protein BTN2 (BTN2).